The sequence spans 484 residues: Calcium-dependent protein kinase 31 (484 aa).

Residue G2 is the site of N-myristoyl glycine attachment. Positions 28 to 290 (YILGDELGQG…AAEVLGHPWM (263 aa)) constitute a Protein kinase domain. Residues 34-42 (LGQGQFGIT) and K57 each bind ATP. The active-site Proton acceptor is the D156. S196 bears the Phosphoserine mark. Residues 295 to 325 (ASDKPIDGVVLSRLKQFRDMNKLKKVALKVI) are autoinhibitory domain. EF-hand domains follow at residues 332-367 (EEIK…LGSN), 368-403 (LSKT…RYRL), 404-439 (DRDD…HGVG), and 444-474 (IKQI…GSSL). Residues D345, D347, S349, T351, E356, D381, D383, N385, T387, E392, D417, D419, D421, H423, E428, D452, D454, D456, K458, and E463 each contribute to the Ca(2+) site.

It belongs to the protein kinase superfamily. Ser/Thr protein kinase family. CDPK subfamily.

Its subcellular location is the membrane. The enzyme catalyses L-seryl-[protein] + ATP = O-phospho-L-seryl-[protein] + ADP + H(+). It catalyses the reaction L-threonyl-[protein] + ATP = O-phospho-L-threonyl-[protein] + ADP + H(+). With respect to regulation, activated by calcium. Autophosphorylation may play an important role in the regulation of the kinase activity. Functionally, may play a role in signal transduction pathways that involve calcium as a second messenger. The polypeptide is Calcium-dependent protein kinase 31 (CPK31) (Arabidopsis thaliana (Mouse-ear cress)).